A 455-amino-acid polypeptide reads, in one-letter code: Ribulose bisphosphate carboxylase large chain (455 aa).

An N6,N6,N6-trimethyllysine modification is found at lysine 5. Substrate-binding residues include asparagine 114 and threonine 164. The Proton acceptor role is filled by lysine 166. Position 168 (lysine 168) interacts with substrate. Positions 192, 194, and 195 each coordinate Mg(2+). The residue at position 192 (lysine 192) is an N6-carboxylysine. Residue histidine 285 is the Proton acceptor of the active site. Residues arginine 286, histidine 318, and serine 370 each contribute to the substrate site.

This sequence belongs to the RuBisCO large chain family. Type I subfamily. Heterohexadecamer of 8 large chains and 8 small chains; disulfide-linked. The disulfide link is formed within the large subunit homodimers. It depends on Mg(2+) as a cofactor. The disulfide bond which can form in the large chain dimeric partners within the hexadecamer appears to be associated with oxidative stress and protein turnover.

The protein localises to the plastid. Its subcellular location is the chloroplast. The catalysed reaction is 2 (2R)-3-phosphoglycerate + 2 H(+) = D-ribulose 1,5-bisphosphate + CO2 + H2O. It catalyses the reaction D-ribulose 1,5-bisphosphate + O2 = 2-phosphoglycolate + (2R)-3-phosphoglycerate + 2 H(+). In terms of biological role, ruBisCO catalyzes two reactions: the carboxylation of D-ribulose 1,5-bisphosphate, the primary event in carbon dioxide fixation, as well as the oxidative fragmentation of the pentose substrate in the photorespiration process. Both reactions occur simultaneously and in competition at the same active site. The protein is Ribulose bisphosphate carboxylase large chain of Lupinus albus (White lupine).